The sequence spans 82 residues: MSQAGAQEAPIKKKRPPVKEEDLKGARGNLTKNQEIKSKTYQVMRECEQAGSTAPSVFSRARTGAETVFEKPKAGPAKSVFG.

The disordered stretch occupies residues 1–34 (MSQAGAQEAPIKKKRPPVKEEDLKGARGNLTKNQ). A Phosphoserine modification is found at Ser-2. The short motif at 10–18 (PIKKKRPPV) is the Nuclear localization signal element.

The protein belongs to the MUSTN1 family.

It localises to the nucleus. Its subcellular location is the cytoplasm. The protein localises to the secreted. The protein resides in the extracellular space. Required for chondrocyte development and proliferation. Plays a role in myoblast differentiation and fusion. Modulates skeletal muscle extracellular matrix composition. Plays a role in skeletal muscle function. Plays a role in glucose homeostasis. The polypeptide is Musculoskeletal embryonic nuclear protein 1 (MUSTN1) (Bos taurus (Bovine)).